A 252-amino-acid polypeptide reads, in one-letter code: Transcriptional regulatory protein HptR (252 aa).

The Response regulatory domain occupies 3-118 (KVVICDDERI…QLEVILGRLV (116 aa)). Aspartate 55 carries the post-translational modification 4-aspartylphosphate. One can recognise an HTH araC/xylS-type domain in the interval 153-250 (NQIVDQIKQS…QMSPSDYCKQ (98 aa)). 2 DNA-binding regions (H-T-H motif) span residues 170 to 191 (SDLIQHIDVSESYAMRTFKDHV) and 217 to 240 (HYEIADKVGFSEYKMFSYHFKKYL).

Post-translationally, phosphorylated by HptS.

It is found in the cytoplasm. In terms of biological role, member of the two-component regulatory system HptS/HptR that regulates genes involved in hexose phosphate transport system in response to changes in extracellular phosphate sources. Activates uhpT expression to facilitate glucose-6-phosphate/G6P utilization by directly binding to its promoter. Antagonizes CcpA-dependent transcription of a subset of CcpA-regulated genes involved in antibiotic susceptibility. This is Transcriptional regulatory protein HptR (hptR) from Staphylococcus aureus (strain NCTC 8325 / PS 47).